The sequence spans 188 residues: GMP synthase [glutamine-hydrolyzing] subunit A (188 aa).

Positions 3–188 constitute a Glutamine amidotransferase type-1 domain; the sequence is PLYVVNNYGQ…FSICTGQNKG (186 aa). C75 functions as the Nucleophile in the catalytic mechanism. Residues H162 and E164 contribute to the active site.

In terms of assembly, heterodimer composed of a glutamine amidotransferase subunit (A) and a GMP-binding subunit (B).

The catalysed reaction is XMP + L-glutamine + ATP + H2O = GMP + L-glutamate + AMP + diphosphate + 2 H(+). Its pathway is purine metabolism; GMP biosynthesis; GMP from XMP (L-Gln route): step 1/1. Functionally, catalyzes the synthesis of GMP from XMP. The chain is GMP synthase [glutamine-hydrolyzing] subunit A from Methanospirillum hungatei JF-1 (strain ATCC 27890 / DSM 864 / NBRC 100397 / JF-1).